The sequence spans 506 residues: CDK5 regulatory subunit-associated protein 3 (506 aa).

Short sequence motifs (shuffled ATG8-binding motif) lie at residues 267–270 (IDWG), 292–295 (IDWG), and 310–313 (IDWG). Residues 269–506 (WGDFGVEAVS…RPVNLMGTSL (238 aa)) are required for interaction with UFL1 and mediates interaction with CHEK1. The interval 355–370 (DELMELEIFLARRAVE) is RPL10a-binding domain (RBD). Lysine 450 is covalently cross-linked (Glycyl lysine isopeptide (Lys-Gly) (interchain with G-Cter in SUMO2)).

This sequence belongs to the CDK5RAP3 family. Substrate adapter component of the UFM1 ribosome E3 ligase (UREL) complex, composed of UFL1, DDRGK1 and CDK5RAP3. Interaction with UFL1 anchors CDK5RAP3 in the cytoplasm, preventing its translocation to the nucleus which allows expression of the CCND1 cyclin and progression of cells through the G1/S transition. Interacts with ATG8 family proteins MAP1LC3A, MAP1LC3B, GABARAP, GABARAPL1 and GABARAPL2. Interacts with CDK5R1; competes with CDK5RAP1 and CDK5RAP2. Interacts with RELA. Interacts with CHEK1; may negatively regulate CHEK1 and thereby stimulate entry into mitosis. Interacts with CDKN2A/ARF and MDM2; forms a ternary complex involved in regulation of p53/TP53. Interacts with MAPK14. Interacts with CCNB1. Interacts with TUBG1; may regulate CDK5RAP3 in mitotic G2/M transition checkpoint. Post-translationally, may be phosphorylated by CDK5. In terms of processing, ubiquitinated. Probably triggers proteasomal degradation and is negatively regulated by UFL1. May be ufmylated. Post-translationally, cleaved by caspases early during apoptosis, the resulting peptides may play a role in rupture of the nuclear envelope.

It localises to the endoplasmic reticulum membrane. The protein resides in the cytoplasm. The protein localises to the nucleus. It is found in the cytoskeleton. Its subcellular location is the microtubule organizing center. It localises to the centrosome. Substrate adapter of E3 ligase complexes mediating ufmylation, the covalent attachment of the ubiquitin-like modifier UFM1 to substrate proteins, and which is involved in various processes, such as ribosome recycling and reticulophagy (also called ER-phagy). As part of the UREL complex, plays a key role in ribosome recycling by promoting mono-ufmylation of RPL26/uL24 subunit of the 60S ribosome. Ufmylation of RPL26/uL24 occurs on free 60S ribosomes following ribosome dissociation: it weakens the junction between post-termination 60S subunits and SEC61 translocons, promoting release and recycling of the large ribosomal subunit from the endoplasmic reticulum membrane. Ufmylation of RPL26/uL24 and subsequent 60S ribosome recycling either take place after normal termination of translation or after ribosome stalling during cotranslational translocation at the endoplasmic reticulum. Within the UREL complex, CDK5RAP3 acts as a substrate adapter that constrains UFL1 ligase activity to mono-ufmylate RPL26/uL24 at 'Lys-134'. The UREL complex is also involved in reticulophagy in response to endoplasmic reticulum stress by promoting ufmylation of proteins such as CYB5R3, thereby promoting lysosomal degradation of ufmylated proteins. Also acts as a regulator of transcription: negatively regulates NF-kappa-B-mediated gene transcription through the control of RELA phosphorylation. Also regulates mitotic G2/M transition checkpoint and mitotic G2 DNA damage checkpoint. Through its interaction with CDKN2A/ARF and MDM2 may induce MDM2-dependent p53/TP53 ubiquitination, stabilization and activation in the nucleus, thereby promoting G1 cell cycle arrest and inhibition of cell proliferation. May also play a role in the rupture of the nuclear envelope during apoptosis. May regulate MAPK14 activity by regulating its dephosphorylation by PPM1D/WIP1. Required for liver development. In Pongo abelii (Sumatran orangutan), this protein is CDK5 regulatory subunit-associated protein 3.